Consider the following 177-residue polypeptide: MGDPRRLSKTYDTPNHPWIGERIKQERELSNKYGLSNKKEIWKMETRLRTFRRQARKLISDTSAQGEKEAVQLFGILNRYGILLKEDATLDDVLSLNLESILERRLQTLVFRKGLANTPKQARQFIVHGHIAVNGKKINAPSYLVPLVEEDAISYMPNSPMASESHPERTDSVKDAE.

One can recognise an S4 RNA-binding domain in the interval 104 to 168 (RRLQTLVFRK…SPMASESHPE (65 aa)). The segment at 157–177 (PNSPMASESHPERTDSVKDAE) is disordered. The segment covering 165-177 (SHPERTDSVKDAE) has biased composition (basic and acidic residues).

It belongs to the universal ribosomal protein uS4 family. In terms of assembly, part of the 30S ribosomal subunit. Contacts protein S5. The interaction surface between S4 and S5 is involved in control of translational fidelity.

In terms of biological role, one of the primary rRNA binding proteins, it binds directly to 16S rRNA where it nucleates assembly of the body of the 30S subunit. Functionally, with S5 and S12 plays an important role in translational accuracy. In Methanococcus aeolicus (strain ATCC BAA-1280 / DSM 17508 / OCM 812 / Nankai-3), this protein is Small ribosomal subunit protein uS4.